A 306-amino-acid chain; its full sequence is MSSNQIALKNLVSMETLSNEEVMALIKRGIEFKNGAKANYDEQHIVANLFFEPSTRTHKAFEVAELKLGCDLLDFDVKTSSVNKGETLYDTILTMSALGVDICVIRHPEVDYYKELVESPTITTSIVNGGDGSGQHPSQSLLDLMTIYQEFGHFEGLKVAIAGDLDHSRVAKSNMQILKRLGAELYFAGPEEWRSEEFSHYGEFVTIDEVVDKVDVMMFLRVQHERHDYESIFSKENYHRLHGLTQERYDRMKDTAILMHPAPVNRDVEIADHLVEAPKSRIVEQMTNGVFVRMAIIEAVLKGREK.

Carbamoyl phosphate-binding residues include Arg-56 and Thr-57. An L-aspartate-binding site is contributed by Lys-84. Positions 106, 136, and 139 each coordinate carbamoyl phosphate. 2 residues coordinate L-aspartate: Arg-169 and Arg-221. The carbamoyl phosphate site is built by Ala-262 and Pro-263.

It belongs to the aspartate/ornithine carbamoyltransferase superfamily. ATCase family. As to quaternary structure, heterododecamer (2C3:3R2) of six catalytic PyrB chains organized as two trimers (C3), and six regulatory PyrI chains organized as three dimers (R2).

The catalysed reaction is carbamoyl phosphate + L-aspartate = N-carbamoyl-L-aspartate + phosphate + H(+). Its pathway is pyrimidine metabolism; UMP biosynthesis via de novo pathway; (S)-dihydroorotate from bicarbonate: step 2/3. Its function is as follows. Catalyzes the condensation of carbamoyl phosphate and aspartate to form carbamoyl aspartate and inorganic phosphate, the committed step in the de novo pyrimidine nucleotide biosynthesis pathway. This chain is Aspartate carbamoyltransferase catalytic subunit, found in Streptococcus gordonii (strain Challis / ATCC 35105 / BCRC 15272 / CH1 / DL1 / V288).